Reading from the N-terminus, the 349-residue chain is Neutral protease 2 homolog ACLA_052720 (349 aa).

Residues 1–19 (MQLTVLASAILALAQGALA) form the signal peptide. A propeptide spanning residues 20–172 (IPAKAPALDV…PAAINLLDRR (153 aa)) is cleaved from the precursor. 2 disulfide bridges follow: cysteine 178/cysteine 250 and cysteine 257/cysteine 275. Residue histidine 300 participates in Zn(2+) binding. Residue glutamate 301 is part of the active site. Residues histidine 304 and aspartate 315 each coordinate Zn(2+).

The protein belongs to the peptidase M35 family. It depends on Zn(2+) as a cofactor.

The protein localises to the secreted. The enzyme catalyses Preferential cleavage of bonds with hydrophobic residues in P1'. Also 3-Asn-|-Gln-4 and 8-Gly-|-Ser-9 bonds in insulin B chain.. Its function is as follows. Secreted metalloproteinase that allows assimilation of proteinaceous substrates. Shows high activities on basic nuclear substrates such as histone and protamine. The polypeptide is Neutral protease 2 homolog ACLA_052720 (Aspergillus clavatus (strain ATCC 1007 / CBS 513.65 / DSM 816 / NCTC 3887 / NRRL 1 / QM 1276 / 107)).